Reading from the N-terminus, the 315-residue chain is Ribosomal protein L11 methyltransferase (315 aa).

S-adenosyl-L-methionine is bound by residues Thr-164, Gly-185, Asp-207, and Asn-250.

It belongs to the methyltransferase superfamily. PrmA family.

Its subcellular location is the cytoplasm. It catalyses the reaction L-lysyl-[protein] + 3 S-adenosyl-L-methionine = N(6),N(6),N(6)-trimethyl-L-lysyl-[protein] + 3 S-adenosyl-L-homocysteine + 3 H(+). Functionally, methylates ribosomal protein L11. The polypeptide is Ribosomal protein L11 methyltransferase (Exiguobacterium sibiricum (strain DSM 17290 / CCUG 55495 / CIP 109462 / JCM 13490 / 255-15)).